Here is a 947-residue protein sequence, read N- to C-terminus: Testis-expressed protein 11 (947 aa).

This sequence belongs to the SPO22 family. As to quaternary structure, interacts with SYCP2. Interacts with PBXIP1; may prevent interaction between PBXIP1 and ESR2. Interacts with SHOC1. Interacts with REDIC1. Testis-specific.

The protein resides in the chromosome. Functionally, regulator of crossing-over during meiosis. Involved in initiation and/or maintenance of chromosome synapsis and formation of crossovers. This chain is Testis-expressed protein 11 (Tex11), found in Mus musculus (Mouse).